Consider the following 569-residue polypeptide: MRASQWFLVTQKETPNDAEIASHQLMLRSGMIRKLGSGLYTWMPLGLRVLRKVENIVREEMNKTHAMELLMPSVQPAELWQETGRWETFGGQLLTMKDSNQREYCFGPTHEEVITDIMRNELQSYKQLPVNFYQIQTKFRDEIRPRFGVMRAREFIMKDAYSFHLSLESLQETYKDMYQAYCRIFDRMGLKYRAVEADTGAIGGSASHEFQVLAESGEDLIFYSDASDYAANIEQATSLKPPKANQSCNETITLVDTPNKKTIDEVASFLGIASNQTIKTLIVKGKEHPMVALVLRGDDELNEVKATKHPLVHSPLSFIDEELILKTLKTPLGSIGPVKLNIPVIVDHQALAMPSFVCGANQADKHFINAAWERDAKYDDAYDLRNVKEGDPSPDGRGTLHCCRGIEVGHVFQLGDKYAKAMNASVINEQGQLQTMIMGCYGLGITRVVAAAIEQHHDEHGIIWPQALAPFQVNIIPLNGARSHAVKEQAESLYQQLKSHGIDVLLDDRNERAGVLFADNDLIGIPHRLVVSERNLEQGCIEYKSRTSSETQLINLDKVVNFIIELINK.

The protein belongs to the class-II aminoacyl-tRNA synthetase family. ProS type 1 subfamily. Homodimer.

It localises to the cytoplasm. It catalyses the reaction tRNA(Pro) + L-proline + ATP = L-prolyl-tRNA(Pro) + AMP + diphosphate. In terms of biological role, catalyzes the attachment of proline to tRNA(Pro) in a two-step reaction: proline is first activated by ATP to form Pro-AMP and then transferred to the acceptor end of tRNA(Pro). As ProRS can inadvertently accommodate and process non-cognate amino acids such as alanine and cysteine, to avoid such errors it has two additional distinct editing activities against alanine. One activity is designated as 'pretransfer' editing and involves the tRNA(Pro)-independent hydrolysis of activated Ala-AMP. The other activity is designated 'posttransfer' editing and involves deacylation of mischarged Ala-tRNA(Pro). The misacylated Cys-tRNA(Pro) is not edited by ProRS. In Legionella pneumophila (strain Lens), this protein is Proline--tRNA ligase.